Reading from the N-terminus, the 644-residue chain is Exoribonuclease 2 (644 aa).

The 328-residue stretch at 189-516 (REDLTALNFV…NHRLLKAVIT (328 aa)) folds into the RNB domain. An S1 motif domain is found at 561–643 (DIRFNAEIID…ETRGIVAKPA (83 aa)).

This sequence belongs to the RNR ribonuclease family. RNase II subfamily.

It localises to the cytoplasm. The catalysed reaction is Exonucleolytic cleavage in the 3'- to 5'-direction to yield nucleoside 5'-phosphates.. Involved in mRNA degradation. Hydrolyzes single-stranded polyribonucleotides processively in the 3' to 5' direction. This is Exoribonuclease 2 from Pectobacterium atrosepticum (strain SCRI 1043 / ATCC BAA-672) (Erwinia carotovora subsp. atroseptica).